The following is a 408-amino-acid chain: Phosphatidylinositol transfer protein CSR1 (408 aa).

Serine 2 carries the N-acetylserine modification. Serine 2 bears the Phosphoserine mark. Residues glutamate 157–leucine 317 enclose the CRAL-TRIO domain.

The protein belongs to the PITP family. As to quaternary structure, forms a complex with 2 TSA2 subunits. Binds phosphatidylinositol (PtdIns).

It localises to the cytoplasm. The protein localises to the microsome. It is found in the endosome. The enzyme catalyses a 1,2-diacyl-sn-glycero-3-phospho-(1D-myo-inositol)(in) = a 1,2-diacyl-sn-glycero-3-phospho-(1D-myo-inositol)(out). Its function is as follows. Non-classical phosphatidylinositol (PtdIns) transfer protein (PITP), which exhibits PtdIns-binding/transfer activity in the absence of detectable PtdCho-binding/transfer activity. Activates SPO14/PLD1 (phospholipase D1) by stimulating phosphoinositide synthesis via the STT4 PtdIns 4-kinase. Modulates ArfGAP function through effects on SPO14 activity. Inhibits phosphatidylcholine degradation by PLB1 (phospholipase B1). May also regulate post-Golgi membrane-trafficking events and have a role resistance to oxidative stress. Inhibits fatty acid synthase activity in response to heme depletion and oleic acid starvation, preventing saturated fatty acid (SFA) accumulation. The protein is Phosphatidylinositol transfer protein CSR1 (CSR1) of Saccharomyces cerevisiae (strain ATCC 204508 / S288c) (Baker's yeast).